The primary structure comprises 478 residues: Ribulose bisphosphate carboxylase large chain (478 aa).

Positions 1–2 are excised as a propeptide; that stretch reads MS. Position 3 is an N-acetylproline (P3). An N6,N6,N6-trimethyllysine modification is found at K14. Positions 123 and 173 each coordinate substrate. The active-site Proton acceptor is the K175. Residue K177 coordinates substrate. K201, D203, and E204 together coordinate Mg(2+). N6-carboxylysine is present on K201. H294 serves as the catalytic Proton acceptor. Substrate contacts are provided by R295, H327, and S379.

This sequence belongs to the RuBisCO large chain family. Type I subfamily. Heterohexadecamer of 8 large chains and 8 small chains; disulfide-linked. The disulfide link is formed within the large subunit homodimers. The cofactor is Mg(2+). In terms of processing, the disulfide bond which can form in the large chain dimeric partners within the hexadecamer appears to be associated with oxidative stress and protein turnover.

The protein localises to the plastid. It is found in the chloroplast. The catalysed reaction is 2 (2R)-3-phosphoglycerate + 2 H(+) = D-ribulose 1,5-bisphosphate + CO2 + H2O. It catalyses the reaction D-ribulose 1,5-bisphosphate + O2 = 2-phosphoglycolate + (2R)-3-phosphoglycerate + 2 H(+). Its function is as follows. RuBisCO catalyzes two reactions: the carboxylation of D-ribulose 1,5-bisphosphate, the primary event in carbon dioxide fixation, as well as the oxidative fragmentation of the pentose substrate in the photorespiration process. Both reactions occur simultaneously and in competition at the same active site. In Lemna minor (Common duckweed), this protein is Ribulose bisphosphate carboxylase large chain.